The sequence spans 577 residues: Urease subunit alpha (577 aa).

Positions 136 to 577 (GTVDCHVHLI…LPMTQRYFLF (442 aa)) constitute a Urease domain. Residues histidine 141, histidine 143, and lysine 224 each contribute to the Ni(2+) site. Lysine 224 is subject to N6-carboxylysine. Histidine 226 contributes to the substrate binding site. Ni(2+) contacts are provided by histidine 253 and histidine 279. The active-site Proton donor is the histidine 327. Residue aspartate 367 participates in Ni(2+) binding.

This sequence belongs to the metallo-dependent hydrolases superfamily. Urease alpha subunit family. Heterotrimer of UreA (gamma), UreB (beta) and UreC (alpha) subunits. Three heterotrimers associate to form the active enzyme. Ni cation is required as a cofactor. Post-translationally, carboxylation allows a single lysine to coordinate two nickel ions.

The protein resides in the cytoplasm. It carries out the reaction urea + 2 H2O + H(+) = hydrogencarbonate + 2 NH4(+). It participates in nitrogen metabolism; urea degradation; CO(2) and NH(3) from urea (urease route): step 1/1. The sequence is that of Urease subunit alpha from Mycobacterium bovis (strain ATCC BAA-935 / AF2122/97).